A 173-amino-acid polypeptide reads, in one-letter code: SGQIQLWQFLLELLSDSSNANCITWEGTNGEFKMTDPDEVARRWGERKSKPNMNYDKLSRALRYYYDKNIMTKVHGKRYAYKFDFAGLAQAMQPVQADPSMYRYQSDLTYLPGYHPTKLNFVGTPINPSTNASLFSSHSSYWSSPTGANIYPSGHVTHPHASHMSSHIGTYYG.

A DNA-binding region (ETS) is located at residues 1 to 84 (SGQIQLWQFL…HGKRYAYKFD (84 aa)).

Belongs to the ETS family.

The protein resides in the nucleus. Acts as a transcriptional activator. This chain is Transcriptional regulator ERG homolog (ERG), found in Lytechinus variegatus (Green sea urchin).